The sequence spans 246 residues: tRNA pseudouridine synthase A (246 aa).

Residue D52 is the Nucleophile of the active site. Y111 is a binding site for substrate.

This sequence belongs to the tRNA pseudouridine synthase TruA family. As to quaternary structure, homodimer.

It catalyses the reaction uridine(38/39/40) in tRNA = pseudouridine(38/39/40) in tRNA. Its function is as follows. Formation of pseudouridine at positions 38, 39 and 40 in the anticodon stem and loop of transfer RNAs. The chain is tRNA pseudouridine synthase A from Borreliella burgdorferi (strain ATCC 35210 / DSM 4680 / CIP 102532 / B31) (Borrelia burgdorferi).